A 454-amino-acid chain; its full sequence is Peroxisome assembly protein 10 (454 aa).

At 1–23 the chain is on the peroxisomal matrix side; that stretch reads MATQPPPARPPPPLTSSPYPYAA. Residues 24 to 53 form a helical membrane-spanning segment; it reads APDIIRAHQKDAYFQGVLANRLSDLHRRLR. Residue Gly54 is a topological domain, cytoplasmic. Residues 55–76 form a helical membrane-spanning segment; it reads ARSAHAWAAETRTFAAALYLCL. At 77–132 the chain is on the peroxisomal matrix side; it reads TTLLGNRTLGEEYCDLVQVEEAPSKLFASSSSKAADDHIYENGLGGGGDGGPLLPS. The chain crosses the membrane as a helical span at residues 133-165; that stretch reads LPRRAGYILTAIVLPHLASRALPSVRSAIRKRL. The Cytoplasmic segment spans residues 166–201; that stretch reads QSRLATLSRRRQQTGTKSGSGRGGRGGGGGITEYRV. Positions 171–194 are disordered; sequence TLSRRRQQTGTKSGSGRGGRGGGG. Gly residues predominate over residues 183 to 194; the sequence is SGSGRGGRGGGG. A helical transmembrane segment spans residues 202 to 229; sequence LRYLLTHLTPLTSGAHFRAATLAVFYFT. Over 230 to 276 the chain is Peroxisomal matrix; that stretch reads GAYYELSKWVWGLRYVFTTRAGRVVDDDHNRHHHSPQHGGGNGGRAG. Residues 277–296 form a helical membrane-spanning segment; it reads YEVLGVLLVVQMAVRAWLHV. The Cytoplasmic segment spans residues 297 to 454; sequence REQLSSGSVA…VQHILPLRAA (158 aa). The interval 302-329 is disordered; that stretch reads SGSVAGGGGEEEEDGEDGFRERTAFGPG. 8 residues coordinate Zn(2+): Cys402, Cys405, Cys417, His419, Cys422, Cys425, Cys436, and Cys439. Residues 402-440 form an RING-type zinc finger; the sequence is CTLCLEELKDPAATQCGHVFCWACIGDWVREKPECPLCR.

This sequence belongs to the pex2/pex10/pex12 family. As to quaternary structure, component of the PEX2-PEX10-PEX12 retrotranslocation channel, composed of PEX2, PEX10 and PEX12.

It is found in the peroxisome membrane. It carries out the reaction S-ubiquitinyl-[E2 ubiquitin-conjugating enzyme]-L-cysteine + [acceptor protein]-L-lysine = [E2 ubiquitin-conjugating enzyme]-L-cysteine + N(6)-ubiquitinyl-[acceptor protein]-L-lysine.. The protein operates within protein modification; protein ubiquitination. Its activity is regulated as follows. The E3 ubiquitin-protein ligase activity is stimulated by PEX12. Functionally, E3 ubiquitin-protein ligase component of a retrotranslocation channel required for peroxisome organization by mediating export of the PEX5 receptor from peroxisomes to the cytosol, thereby promoting PEX5 recycling. The retrotranslocation channel is composed of PEX2, PEX10 and PEX12; each subunit contributing transmembrane segments that coassemble into an open channel that specifically allows the passage of PEX5 through the peroxisomal membrane. PEX10 also regulates PEX5 recycling by acting as a E3 ubiquitin-protein ligase. When PEX5 recycling is compromised, PEX10 catalyzes polyubiquitination of PEX5 during its passage through the retrotranslocation channel, leading to its degradation. This Thermothelomyces thermophilus (strain ATCC 42464 / BCRC 31852 / DSM 1799) (Sporotrichum thermophile) protein is Peroxisome assembly protein 10.